The following is a 161-amino-acid chain: Anaerobic nitrite reductase Hb2 (161 aa).

In terms of domain architecture, Globin spans Gly8–Lys157. Positions Glu41–Ser45 match the Homodimerization motif. Positions 51, 65, 69, 99, 103, and 104 each coordinate heme b. Residues Asn111 to Glu123 carry the Homodimerization motif.

The protein belongs to the plant globin family. In terms of assembly, homodimer. Heme b is required as a cofactor. Predominantly expressed in roots, cotyledons, stems and nodules (confined to some cells associated with the nitrogen-fixing Bradyrhizobium symbiont), and, to a lower extent, in flowers, young leaves, pods and seeds.

The protein localises to the cytoplasm. The protein resides in the nucleus. It carries out the reaction Fe(III)-heme b-[protein] + nitric oxide + H2O = Fe(II)-heme b-[protein] + nitrite + 2 H(+). Its function is as follows. Phytoglobin that reduces nitrite to nitric oxide (NO) under anoxic conditions (e.g. during flooding or in waterlogged soil) and upon root nodulation. Required for general plant development and during nodulation, especially for the onset of symbiosis. Monitors nitric oxide (NO) levels during early phase of the nitrogen-fixing symbiosis and buffers oxygen in functioning nodules. May not function as an oxygen storage or transport protein. Has an unusually high affinity for O(2) through a hexacoordinate heme iron because of a very low dissociation constant. Involved in water stress tolerance. The protein is Anaerobic nitrite reductase Hb2 of Glycine max (Soybean).